Here is a 222-residue protein sequence, read N- to C-terminus: Coiled-coil domain-containing protein 43 homolog (222 aa).

The stretch at 80-111 (ETENKLKLTNLKLEQELKIKETTQSEINEEEK) forms a coiled coil. 2 disordered regions span residues 102 to 126 (TQSEINEEEKYENPYHKMSREEQKK) and 159 to 222 (EDNK…KRRL). Basic and acidic residues-rich tracts occupy residues 112 to 126 (YENPYHKMSREEQKK) and 175 to 212 (RIADEEKAKREKSKIEHQKKVQRDKEALEKQKRDEEKK). The stretch at 168–222 (GENLNAKRIADEEKAKREKSKIEHQKKVQRDKEALEKQKRDEEKKKTVKKEKRRL) forms a coiled coil. Over residues 213–222 (KTVKKEKRRL) the composition is skewed to basic residues.

The protein belongs to the CCDC43 family.

The protein is Coiled-coil domain-containing protein 43 homolog of Dictyostelium discoideum (Social amoeba).